Reading from the N-terminus, the 944-residue chain is MVNYVLRKMLGTKNERELKRLRPLVARVSELEPRMKALSDADFPRLTAEWKQQVRNGRPLDDLMPEAFALVREAGVRALGMRHFDVQLIGGAVLHSGRIAEMKTGEGKTLVATLPSVLNALSGRGVHVVTVNDYLARRDSEWMGRLYRFCGLTTGVIVHGLTDRERQDAYHSDITYGQNNEFGFDYLRDNMKFRLQDYVQGELNFAIVDEVDSILIDEARTPLIISGPSDESSDLYYRVNQVIPSMIRDQDFTVDEKSRTIVMSDSGVEKMEKKLGVQNLYDPNAIETLHHVEQALRAHHLYRNEVDYVVKNGEVLIVDEFTGRLMPGRRWSDGLHQAVEAKEGVKIEAENQTLATISFQNYFRMYSKLAGMTGTADTEAEEFAKTYNLDVVVVPTNKKNVRKDSEDVVYKTEREKFGALCDEIETRHKKGQPVLVGTVSVAKSEVVSSLLKRRGVPHDVLNAKHHQREAEIVAQAGRKGSVTISTNMAGRGTDIILGGNAEMMAKHEVGPEPDLPMEGEAEESFLARKQEWARRLEETRERLRGQTATEHDEVVALGGLHIVGTERHESRRIDNQLRGRAGRQGDPGSSIFYLSLEDELMRIFGSERIQGLMSRMGMKEGEQIEHPWLTKAIEGAQKKVEGHNFDIRKNLLEYDDVMNQQRRSVYRLRRMVLGFGAGVPVVEYDEEPKTRKKTRREQVFTWGDQREHVLDLIEDLVFDMVGASCPNRLSDWNLDGLSSMVKEQFGVEMKFAPPSGKAADARREIEEQVYAVVEKAYRQKEEELGIGPDGEPVLRRYEQWLYLQAIDQQWKDHLLSMDHLRQGIGLRGYGQKDPKQEYKKEGYEMFVQMTWRVKSAVIGNLLRLQLVRQETAEEIEQKRLAAQRRAMQRITETHAAAAGDGEEKPRPKQETVVRTQPKVGRNDPCPCGSGKKYKKCHGATEAAV.

Residues Gln-87, 105–109 (GEGKT), and Asp-494 contribute to the ATP site. Positions 894–944 (HAAAAGDGEEKPRPKQETVVRTQPKVGRNDPCPCGSGKKYKKCHGATEAAV) are disordered. Residues 901–911 (GEEKPRPKQET) show a composition bias toward basic and acidic residues. Zn(2+)-binding residues include Cys-925, Cys-927, Cys-936, and His-937.

It belongs to the SecA family. As to quaternary structure, monomer and homodimer. Part of the essential Sec protein translocation apparatus which comprises SecA, SecYEG and auxiliary proteins SecDF-YajC and YidC. Requires Zn(2+) as cofactor.

It localises to the cell inner membrane. It is found in the cytoplasm. The enzyme catalyses ATP + H2O + cellular proteinSide 1 = ADP + phosphate + cellular proteinSide 2.. Functionally, part of the Sec protein translocase complex. Interacts with the SecYEG preprotein conducting channel. Has a central role in coupling the hydrolysis of ATP to the transfer of proteins into and across the cell membrane, serving as an ATP-driven molecular motor driving the stepwise translocation of polypeptide chains across the membrane. This is Protein translocase subunit SecA from Anaeromyxobacter sp. (strain Fw109-5).